A 318-amino-acid chain; its full sequence is Phosphatidylglycerol--prolipoprotein diacylglyceryl transferase (318 aa).

Transmembrane regions (helical) follow at residues 23-43 (PLTI…GAWL), 59-79 (MDII…YHVI), 98-118 (IWEG…GAAI), 124-146 (GVRL…AMGR), 192-212 (FQPT…LLVF), 219-239 (LGAG…RFIF), and 253-273 (LRVN…VFLI). Arginine 146 lines the a 1,2-diacyl-sn-glycero-3-phospho-(1'-sn-glycerol) pocket. Residues 293–312 (FDTRANGHDPEKHDETDGKG) show a composition bias toward basic and acidic residues. The disordered stretch occupies residues 293-318 (FDTRANGHDPEKHDETDGKGNRHHVP).

It belongs to the Lgt family.

The protein resides in the cell membrane. The enzyme catalyses L-cysteinyl-[prolipoprotein] + a 1,2-diacyl-sn-glycero-3-phospho-(1'-sn-glycerol) = an S-1,2-diacyl-sn-glyceryl-L-cysteinyl-[prolipoprotein] + sn-glycerol 1-phosphate + H(+). Its pathway is protein modification; lipoprotein biosynthesis (diacylglyceryl transfer). Its function is as follows. Catalyzes the transfer of the diacylglyceryl group from phosphatidylglycerol to the sulfhydryl group of the N-terminal cysteine of a prolipoprotein, the first step in the formation of mature lipoproteins. This chain is Phosphatidylglycerol--prolipoprotein diacylglyceryl transferase, found in Paenarthrobacter aurescens (strain TC1).